Reading from the N-terminus, the 358-residue chain is MTPPPPKRQKRDEYRKATAEATSQSGASDVAEIKLPKKKYYRQRAHANPFSDHHLKYPLSPAHMDWSSHYPAFVDPDPSHINLAGARRLLKDVEVVDIGCGFGGLLIGLAPLLPESLIVGMEIRVSVLEYVTTRIQALRAQQQKLRAATATATAASETPSQQQAQIDGKQANANAAADAASPAPSTDTEHMPTTLVPGSYENISAIRSNTMKFFPNFFARHQLSKIFICFPDPHFKARKHKARIISETLNAEYAYALRPGGLLYTITDVEEYHHWILRHFGVELGAEEESEEKSTSPNANANAGVRELFERVSEEELEKDECVRVMKEATEEGKKVARNKGNKYVAVFRRKTDPEWPA.

A disordered region spans residues 1-29; sequence MTPPPPKRQKRDEYRKATAEATSQSGASD. S-adenosyl-L-methionine is bound by residues Gly-99 and 122–123; that span reads EI. A compositionally biased stretch (low complexity) spans 151–186; sequence TATAASETPSQQQAQIDGKQANANAAADAASPAPST. The segment at 151–194 is disordered; sequence TATAASETPSQQQAQIDGKQANANAAADAASPAPSTDTEHMPTT. S-adenosyl-L-methionine is bound by residues 209-210 and Cys-229; that span reads NT. Residue Asp-232 is part of the active site. S-adenosyl-L-methionine is bound at residue 330 to 332; sequence TEE.

This sequence belongs to the class I-like SAM-binding methyltransferase superfamily. TrmB family. As to quaternary structure, forms a complex with trm82.

It is found in the nucleus. It catalyses the reaction guanosine(46) in tRNA + S-adenosyl-L-methionine = N(7)-methylguanosine(46) in tRNA + S-adenosyl-L-homocysteine. It participates in tRNA modification; N(7)-methylguanine-tRNA biosynthesis. Its function is as follows. Catalyzes the formation of N(7)-methylguanine at position 46 (m7G46) in tRNA. The chain is tRNA (guanine-N(7)-)-methyltransferase (trm8) from Aspergillus fumigatus (strain CBS 144.89 / FGSC A1163 / CEA10) (Neosartorya fumigata).